A 241-amino-acid polypeptide reads, in one-letter code: Small ribosomal subunit protein bS6 (241 aa).

The segment covering 97–108 (KPKIRERNRKYT) has biased composition (basic residues). The disordered stretch occupies residues 97–241 (KPKIRERNRK…YNNKKPQSSN (145 aa)). Positions 109-118 (LRRDRFDKPN) are enriched in basic and acidic residues. Composition is skewed to low complexity over residues 130 to 151 (QDQQ…QASQ) and 161 to 182 (DDFQ…NQSG). Residues 183-193 (YHRENNRHNQE) show a composition bias toward basic and acidic residues. Residues 194 to 210 (NMHQNNKNHQNQTSQTQ) are compositionally biased toward low complexity.

This sequence belongs to the bacterial ribosomal protein bS6 family.

In terms of biological role, binds together with bS18 to 16S ribosomal RNA. This Mesomycoplasma hyopneumoniae (strain J / ATCC 25934 / NCTC 10110) (Mycoplasma hyopneumoniae) protein is Small ribosomal subunit protein bS6.